A 1163-amino-acid polypeptide reads, in one-letter code: Hamartin (1163 aa).

Residue K30 forms a Glycyl lysine isopeptide (Lys-Gly) (interchain with G-Cter in ubiquitin) linkage. A compositionally biased stretch (polar residues) spans 295–316 (SSYVDTQNSYGGATSTPSSTSR). Disordered stretches follow at residues 295–337 (SSYV…STRP) and 353–594 (CGMT…QRGV). Low complexity predominate over residues 321 to 337 (STPGQLPQSLSSLSTRP). The span at 393–402 (TSPPPAPPCP) shows a compositional bias: pro residues. The mediates interaction with WDR45B stretch occupies residues 403–787 (QDDCAHGPAS…QIRQLQHDRE (385 aa)). The segment covering 474–487 (EKDKEEAAISKELS) has biased composition (basic and acidic residues). Phosphoserine occurs at positions 487, 505, 511, 521, 595, and 598. Residues 512–530 (LSGSQRKTHSAASGTQGFS) are compositionally biased toward polar residues. 2 coiled-coil regions span residues 721 to 919 (RKVI…LAKK) and 970 to 994 (EKDG…ERLD). The segment covering 1008-1020 (NEEAAGHNGETRT) has biased composition (basic and acidic residues). The interval 1008–1163 (NEEAAGHNGE…DYNETHHEHS (156 aa)) is disordered. The span at 1029-1046 (SCGGRVTGGSSSSSSELS) shows a compositional bias: low complexity. A compositionally biased stretch (polar residues) spans 1066–1083 (EPSSSIPTTVGSLPSSKS). Over residues 1088–1099 (KTRELFRNKSES) the composition is skewed to basic and acidic residues. S1097 is modified (phosphoserine). Residues 1131–1146 (PPSLDAPHPSSPSSDS) are compositionally biased toward low complexity. Residues 1154 to 1163 (DYNETHHEHS) are compositionally biased toward basic and acidic residues.

In terms of assembly, component of the TSC-TBC complex (also named Rhebulator complex), composed of 2 molecules of TSC1, 2 molecules of TSC2 and 1 molecule of TBC1D7. Probably forms a complex composed of chaperones HSP90 and HSP70, co-chaperones STIP1/HOP, CDC37, PPP5C, PTGES3/p23, TSC1 and client protein TSC2. Forms a complex composed of chaperones HSP90 and HSP70, co-chaperones CDC37, PPP5C, TSC1 and client protein TSC2, CDK4, AKT, RAF1 and NR3C1; this complex does not contain co-chaperones STIP1/HOP and PTGES3/p23. Forms a complex containing HSP90AA1, TSC1 and TSC2; TSC1 is required to recruit TCS2 to the complex. Interacts (via C-terminus) with the closed form of HSP90AA1 (via the middle domain and TPR repeat-binding motif). Interacts with DOCK7. Interacts with FBXW5. Interacts with WDR45B. Interacts with RPAP3 and URI1. Post-translationally, phosphorylation at Ser-505 does not affect interaction with TSC2. 'Lys-63'-linked ubiquitinated at Lys-30 by PELI1; the ubiquitination promotes TSC1/TSC2 complex stability. In terms of tissue distribution, highly expressed in brain, spleen and kidney, followed by liver and heart.

The protein resides in the lysosome membrane. It localises to the cytoplasm. It is found in the cytosol. Functionally, non-catalytic component of the TSC-TBC complex, a multiprotein complex that acts as a negative regulator of the canonical mTORC1 complex, an evolutionarily conserved central nutrient sensor that stimulates anabolic reactions and macromolecule biosynthesis to promote cellular biomass generation and growth. The TSC-TBC complex acts as a GTPase-activating protein (GAP) for the small GTPase RHEB, a direct activator of the protein kinase activity of mTORC1. In absence of nutrients, the TSC-TBC complex inhibits mTORC1, thereby preventing phosphorylation of ribosomal protein S6 kinase (RPS6KB1 and RPS6KB2) and EIF4EBP1 (4E-BP1) by the mTORC1 signaling. The TSC-TBC complex is inactivated in response to nutrients, relieving inhibition of mTORC1. Within the TSC-TBC complex, TSC1 stabilizes TSC2 and prevents TSC2 self-aggregation. Involved in microtubule-mediated protein transport via its ability to regulate mTORC1 signaling. Also acts as a co-chaperone for HSP90AA1 facilitating HSP90AA1 chaperoning of protein clients such as kinases, TSC2 and glucocorticoid receptor NR3C1. Increases ATP binding to HSP90AA1 and inhibits HSP90AA1 ATPase activity. Competes with the activating co-chaperone AHSA1 for binding to HSP90AA1, thereby providing a reciprocal regulatory mechanism for chaperoning of client proteins. Recruits TSC2 to HSP90AA1 and stabilizes TSC2 by preventing the interaction between TSC2 and ubiquitin ligase HERC1. This chain is Hamartin, found in Rattus norvegicus (Rat).